Consider the following 2017-residue polypeptide: Rootletin (2017 aa).

Coiled coils occupy residues 70–262 and 318–444; these read ATEM…KVTN and ERDL…LETE. Over residues 464–483 the composition is skewed to polar residues; it reads SESGVQLSGSERTADASNGS. The disordered stretch occupies residues 464–518; sequence SESGVQLSGSERTADASNGSLRGLSGQRTPSPPRRSSPGRGRSPRRGPSPACSDS. Low complexity predominate over residues 499 to 513; sequence SSPGRGRSPRRGPSP. Coiled coils occupy residues 546–1058 and 1091–1438; these read QDLL…LAES and EMER…GLRS. 2 disordered regions span residues 1184–1226 and 1443–1575; these read LRES…RSAV and GLGL…GRLS. S1460, S1470, S1476, S1483, S1486, S1490, and S1496 each carry phosphoserine. Residues 1505–1704 are a coiled coil; it reads EAVRGALREF…DSEVKAGTLQ (200 aa). The span at 1510 to 1529 shows a compositional bias: basic and acidic residues; sequence ALREFLQELRSAQRERDELR. Phosphoserine occurs at positions 1575 and 1660. The segment at 1962–2017 is disordered; sequence RSAQAQTERTLEARERAHRQRVRGLEEQVSTLKGQLQQELRRSSAPFSPPSGPPEK. The span at 1989–1999 shows a compositional bias: polar residues; it reads QVSTLKGQLQQ. Pro residues predominate over residues 2008–2017; it reads FSPPSGPPEK.

It belongs to the rootletin family. In terms of assembly, homomer. Interacts with KLC3, NEK2 and the N-terminus of CEP250. Interacts with CEP44. Interacts with CCDC102B (via N-terminus). In terms of processing, phosphorylated by NEK2 which may regulate its association with centrosomes.

The protein resides in the cytoplasm. The protein localises to the cytoskeleton. It is found in the microtubule organizing center. Its subcellular location is the centrosome. It localises to the centriole. The protein resides in the cilium basal body. In terms of biological role, major structural component of the ciliary rootlet, a cytoskeletal-like structure in ciliated cells which originates from the basal body at the proximal end of a cilium and extends proximally toward the cell nucleus. Furthermore, is required for the correct positioning of the cilium basal body relative to the cell nucleus, to allow for ciliogenesis. Contributes to centrosome cohesion before mitosis. This is Rootletin from Homo sapiens (Human).